The chain runs to 412 residues: Histone-lysine N-methyltransferase SUV39H1 (412 aa).

The interaction with SIRT1 stretch occupies residues 1–89 (MAENLKGCSV…LKCIRVLKQF (89 aa)). Residues 43-101 (FEVEYLCDYKKIREQEYYLVKWRGYPDSENTWEPRQNLKCIRVLKQFHKDLERELVRRH) form the Chromo domain. Residues 179–240 (VGCECQDCLL…DCPNRVVQKG (62 aa)) form the Pre-SET domain. Residues Cys181, Cys183, Cys186, Cys194, Cys195, Cys222, Cys226, Cys228, and Cys232 each contribute to the Zn(2+) site. An SET domain is found at 243 to 366 (YDLCIFRTND…AGEELTFDYN (124 aa)). Residue 254–256 (RGW) participates in S-adenosyl-L-methionine binding. Residues 255–377 (GWGVRTLEKI…QVDPVDMEST (123 aa)) are mediates interaction with MECOM. An N6-acetyllysine modification is found at Lys266. S-adenosyl-L-methionine is bound by residues Tyr297 and 323–324 (NH). Cys326 contacts Zn(2+). Ser391 is subject to Phosphoserine. The region spanning 396–412 (VRIECKCGTTACRKYLF) is the Post-SET domain. Positions 400, 402, and 407 each coordinate Zn(2+).

It belongs to the class V-like SAM-binding methyltransferase superfamily. Histone-lysine methyltransferase family. Suvar3-9 subfamily. As to quaternary structure, interacts with CCAR2 and GFI1B. Component of the eNoSC complex, composed of SIRT1, SUV39H1 and RRP8. Interacts with H3 and H4 histones. Interacts with DNMT3B, CBX1, CBX4, MBD1, RUNX1, RUNX3, MYOD1, SMAD5 and RB1. Interacts with SBF1 through the SET domain. Interacts with HDAC1 and HDAC2 through the N-terminus and associates with the core histone deacetylase complex composed of HDAC1, HDAC2, RBBP4 and RBBP7. Interacts (via SET domain) with MECOM; enhances MECOM transcriptional repression activity. Interacts with LMNA; the interaction increases stability of SUV39H1. The large PER complex involved in the histone methylation is composed of at least PER2, CBX3, TRIM28, SUV39H1 and/or SUV39H2; CBX3 mediates the formation of the complex. Phosphorylated on serine residues, and to a lesser degree, on threonine residues. Post-translationally, acetylated at Lys-266, leading to inhibition of enzyme activity. SIRT1-mediated deacetylation relieves this inhibition. In terms of processing, ubiquitinated by the DCX(DCAF13) E3 ubiquitin ligase complex, leading to its degradation. As to expression, widely expressed.

It is found in the nucleus. It localises to the nucleus lamina. The protein localises to the nucleoplasm. The protein resides in the chromosome. Its subcellular location is the centromere. The enzyme catalyses L-lysyl(9)-[histone H3] + 3 S-adenosyl-L-methionine = N(6),N(6),N(6)-trimethyl-L-lysyl(9)-[histone H3] + 3 S-adenosyl-L-homocysteine + 3 H(+). With respect to regulation, negatively regulated by CCAR2. Histone methyltransferase that specifically trimethylates 'Lys-9' of histone H3 using monomethylated H3 'Lys-9' as substrate. H3 'Lys-9' trimethylation represents a specific tag for epigenetic transcriptional repression by recruiting HP1 (CBX1, CBX3 and/or CBX5) proteins to methylated histones. Mainly functions in heterochromatin regions, thereby playing a central role in the establishment of constitutive heterochromatin at pericentric and telomere regions. H3 'Lys-9' trimethylation is also required to direct DNA methylation at pericentric repeats. SUV39H1 is targeted to histone H3 via its interaction with RB1 and is involved in many processes, such as repression of MYOD1-stimulated differentiation, regulation of the control switch for exiting the cell cycle and entering differentiation, repression by the PML-RARA fusion protein, BMP-induced repression, repression of switch recombination to IgA and regulation of telomere length. Component of the eNoSC (energy-dependent nucleolar silencing) complex, a complex that mediates silencing of rDNA in response to intracellular energy status and acts by recruiting histone-modifying enzymes. The eNoSC complex is able to sense the energy status of cell: upon glucose starvation, elevation of NAD(+)/NADP(+) ratio activates SIRT1, leading to histone H3 deacetylation followed by dimethylation of H3 at 'Lys-9' (H3K9me2) by SUV39H1 and the formation of silent chromatin in the rDNA locus. Recruited by the PER complex to the E-box elements of the circadian target genes such as PER2 itself or PER1, contributes to the conversion of local chromatin to a heterochromatin-like repressive state through H3 'Lys-9' trimethylation. This chain is Histone-lysine N-methyltransferase SUV39H1 (Suv39h1), found in Mus musculus (Mouse).